We begin with the raw amino-acid sequence, 746 residues long: Tudor domain-containing protein krimp (746 aa).

The tract at residues 1–310 is involved in homooligomerization; sequence MNLEDISMIM…RDIYNQILKD (310 aa). The segment at 311-489 is non-canonical tudor domain; that stretch reads MAAFPENTIV…PAGITEDDMA (179 aa). The C3H1-type zinc-finger motif lies at 511-540; the sequence is KDEQRICRHYDPKLNGCFKGNNCRFAHEPF. Residues 613–670 form the Tudor domain; sequence KPRLLDIVLALYSDGCFYRAQIIDEFPSEYMIFYVDYGNTEFVPLSCLAPCENVDSFK.

The protein belongs to the Tudor domain containing protein family. In terms of assembly, homooligomerizes (via N-terminus). Component of the ping-pong piRNA processing (4P) complex consisting of krimp, aub and AGO3; a single molecule of krimp can bind both aub and AGO3 without the need for homooligomerization. Interacts (via canonical tudor domain) with aub (via N-terminus when symmetrically dimethylated on arginine residues). Interacts (via non-canonical tudor domain) with AGO3 (via N-terminus when unmethylated on arginine residues); this interaction leads to symmetrical dimethylation on AGO3 arginine residues and its subsequent dissociation from krimp. Krimp associated AGO3 is mostly free of piRNA binding and the interaction plays an important role in the loading of AGO3 with piRNAs; piRNA binding stimulates methylation of ACO3 by the csul/PRMT5 methylosome complex and promotes dissociation of the two proteins. Widely expressed in female germline cells, including differentiating germ cells in germarium and egg chambers (at protein level).

The protein localises to the cytoplasm. It is found in the perinuclear region. The protein resides in the cytoplasmic ribonucleoprotein granule. Functionally, stable structural component of the perinuclear meiotic nuage, a germline-specific subcellular membraneless ribonucleoprotein compartment involved in production of transposable element-repressing Piwi-interacting RNA (piRNA)-induced silencing complexes (piRISCs), which are essential for maintaining germline integrity during oogenesis. Scaffold component of the ping-pong piRNA processing (4P) complex that recruits the Piwi proteins aub and AGO3 to specific subregions of the nuage where it coordinates their activity in the ping-pong amplification step of secondary piRNA biogenesis. Binds methylated aub, which is associated with piRNA, and unmethylated AGO3, which is not associated with piRNA, bringing the Piwi proteins into close proximity and facilitating the loading of freshly cut piRNAs generated by aub onto AGO3. Promotes asymmetric ping-pong amplification by aub and AGO3 to bias production towards antisense piRNAs capable of silencing transposable elements. Required for symmetrical dimethylation of AGO3, probably by recruitment to the nuage where methylosome components are located; dimethylation promotes AGO3 dissociation and interaction with other tudor-domain containing proteins such as tud. Required for the recruitment of mael to the perinuclear meiotic nuage. Required for the recruitment of aub to the nuage in testes but not in ovaries. Involved in repression of long interspersed nuclear elements (LINEs) including HeT-A, I-element LINEs and possibly mst40, but not TART LINEs. In Drosophila melanogaster (Fruit fly), this protein is Tudor domain-containing protein krimp.